The chain runs to 879 residues: Beta-mannosidase (879 aa).

The N-terminal stretch at 1-17 (MLLRLLLLLAPCGAGFA) is a signal peptide. Residues N35 and N77 are each glycosylated (N-linked (GlcNAc...) asparagine). A disulfide bridge connects residues C167 and C176. Position 190-192 (190-192 (WDW)) interacts with substrate. Residue N297 is glycosylated (N-linked (GlcNAc...) asparagine). N456 contributes to the substrate binding site. E457 functions as the Proton donor in the catalytic mechanism. 3 disulfide bridges follow: C540–C629, C732–C761, and C764–C769. E554 functions as the Nucleophile in the catalytic mechanism. N803 carries an N-linked (GlcNAc...) asparagine glycan.

Belongs to the glycosyl hydrolase 2 family. In terms of assembly, monomer. Post-translationally, N-glycosylated. Detected in kidney (at protein level). Found in spleen and to a lesser extent in liver. Not detected in kidney or brain.

The protein resides in the lysosome. The enzyme catalyses Hydrolysis of terminal, non-reducing beta-D-mannose residues in beta-D-mannosides.. It participates in glycan metabolism; N-glycan degradation. In terms of biological role, exoglycosidase that cleaves the single beta-linked mannose residue from the non-reducing end of all N-linked glycoprotein oligosaccharides. The polypeptide is Beta-mannosidase (MANBA) (Capra hircus (Goat)).